The chain runs to 637 residues: Sodium-dependent phosphate transport protein 2A (637 aa).

At 1 to 103 (MMSYSERLGG…LAQVGTKLLK (103 aa)) the chain is on the cytoplasmic side. Phosphoserine occurs at positions 14 and 34. A helical membrane pass occupies residues 104 to 125 (VPLMLGFLYLFVCSLDVLSSAF). The Extracellular segment spans residues 126 to 145 (QLAGGKVAGDIFKDNAILSN). A helical transmembrane segment spans residues 146-163 (PVAGLVVGILVTVLVQSS). At 164–216 (STSTSIIVSMVSSGLLEVSSAIPIIMGSNIGTSVTNTIVALMQAGDRTDFRRA) the chain is on the cytoplasmic side. A helical transmembrane segment spans residues 217-236 (FAGATVHDCFNWLSVLVLLP). 2 cysteine pairs are disulfide-bonded: cysteine 225/cysteine 520 and cysteine 306/cysteine 334. Topologically, residues 237–345 (LEAATGYLHH…HIFVDTGLPD (109 aa)) are extracellular. 2 N-linked (GlcNAc...) asparagine glycosylation sites follow: asparagine 298 and asparagine 328. The helical transmembrane segment at 346-368 (LAVGLILLAGSLVVLCTCLILLV) threads the bilayer. Residues 369–410 (KMLNSLLKGQVANVIQKVINTDFPAPFTWVTGYFAMVVGASM) lie on the Cytoplasmic side of the membrane. A helical transmembrane segment spans residues 411 to 434 (TFVVQSSSVFTSAITPLIGLGVIS). The Extracellular segment spans residues 435-464 (IERAYPLTLGSNIGTTTTAILAALASPREK). The chain crosses the membrane as a helical span at residues 465–485 (LSSSFQIALCHFFFNISGILL). Residues 486-511 (WYPLPCTRLPIRMAKALGKRTAKYRW) lie on the Cytoplasmic side of the membrane. Position 506 is a phosphothreonine; by PKC (threonine 506). The helical transmembrane segment at 512–532 (FAVLYLLVCFLLLPSLVFGIS) threads the bilayer. Residues 533-537 (MAGWQ) are Extracellular-facing. The chain crosses the membrane as a helical span at residues 538-559 (AMVGVGTPFGALLAFVVLVNVL). The Cytoplasmic portion of the chain corresponds to 560–637 (QSRSPGHLPK…LPAHHNATRL (78 aa)). Serine 605 is modified (phosphoserine). A Phosphothreonine modification is found at threonine 621. Serine 623 carries the phosphoserine modification.

The protein belongs to the SLC34A transporter family. Interacts via its C-terminal region with NHERF4. Interacts with NHERF1. Interacts with TMEM174; regulates SLC34A1 internalization by PTH and FGF23. Kidney.

The protein localises to the apical cell membrane. It localises to the cell membrane. It catalyses the reaction 3 Na(+)(out) + phosphate(out) = 3 Na(+)(in) + phosphate(in). Transport activity is significantly increased in response to dietary phosphate deprivation. Functionally, involved in actively transporting phosphate into cells via Na(+) cotransport in the renal brush border membrane. The cotransport has a Na(+):Pi stoichiometry of 3:1 and is electrogenic. The polypeptide is Sodium-dependent phosphate transport protein 2A (Rattus norvegicus (Rat)).